A 102-amino-acid chain; its full sequence is Small ribosomal subunit protein uS10 (102 aa).

The protein belongs to the universal ribosomal protein uS10 family. In terms of assembly, part of the 30S ribosomal subunit.

Involved in the binding of tRNA to the ribosomes. The chain is Small ribosomal subunit protein uS10 from Thermococcus gammatolerans (strain DSM 15229 / JCM 11827 / EJ3).